A 378-amino-acid chain; its full sequence is Lysocardiolipin acyltransferase 1 (378 aa).

2 consecutive transmembrane segments (helical) span residues 9–29 and 46–66; these read FVVA…GPFL and IVAT…GAKV. The HXXXXD motif signature appears at 85–90; the sequence is HRTRMD. Transmembrane regions (helical) follow at residues 302 to 322 and 336 to 358; these read LRVL…PMGT and FAAM…LIEL.

This sequence belongs to the 1-acyl-sn-glycerol-3-phosphate acyltransferase family.

It is found in the endoplasmic reticulum membrane. It carries out the reaction a 1-acyl-sn-glycero-3-phosphate + an acyl-CoA = a 1,2-diacyl-sn-glycero-3-phosphate + CoA. The enzyme catalyses a 1-acyl-sn-glycero-3-phospho-(1D-myo-inositol) + an acyl-CoA = a 1,2-diacyl-sn-glycero-3-phospho-(1D-myo-inositol) + CoA. The catalysed reaction is 1-acyl-sn-glycero-3-phospho-(1'-sn-glycerol) + an acyl-CoA = a 1,2-diacyl-sn-glycero-3-phospho-(1'-sn-glycerol) + CoA. It catalyses the reaction 1-hexadecanoyl-sn-glycero-3-phosphate + (9Z)-octadecenoyl-CoA = 1-hexadecanoyl-2-(9Z-octadecenoyl)-sn-glycero-3-phosphate + CoA. It carries out the reaction 1-(9Z-octadecenoyl)-sn-glycero-3-phosphate + (9Z)-octadecenoyl-CoA = 1,2-di-(9Z-octadecenoyl)-sn-glycero-3-phosphate + CoA. The enzyme catalyses 1-(9Z,12Z)-octadecadienoyl-sn-glycero-3-phosphate + (9Z)-octadecenoyl-CoA = 1-(9Z,12Z)-octadecadienoyl-2-(9Z)-octadecenoyl-sn-glycero-3-phosphate + CoA. The catalysed reaction is 1-(9Z,12Z,15Z)-octadecatrienoyl-sn-glycero-3-phosphate + (9Z)-octadecenoyl-CoA = 1-(9Z,12Z,15Z)-octadecatrienoyl-2-(9Z)-octadecenoyl-sn-glycero-3-phosphate + CoA. It catalyses the reaction 1-(9Z-octadecenoyl)-sn-glycero-3-phosphate + hexadecanoyl-CoA = 1-(9Z)-octadecenoyl-2-hexadecanoyl-sn-glycero-3-phosphate + CoA. It carries out the reaction 1-(9Z-octadecenoyl)-sn-glycero-3-phosphate + octadecanoyl-CoA = 1-(9Z-octadecenoyl)-2-octadecanoyl-sn-glycero-3-phosphate + CoA. The enzyme catalyses 1-acyl-sn-glycero-3-phospho-(1'-sn-glycerol) + (9Z)-octadecenoyl-CoA = 1-acyl-2-(9Z-octadecenoyl)-sn-glycero-3-phospho-(1'-sn-glycerol) + CoA. The catalysed reaction is a 1-acyl-sn-glycero-3-phospho-(1D-myo-inositol) + (9Z)-octadecenoyl-CoA = a 1-acyl-2-(9Z-octadecenoyl)-sn-glycero-3-phospho-(1D-myo-inositol) + CoA. It catalyses the reaction 1-hexadecanoyl-sn-glycero-3-phospho-(1D-myo-inositol) + hexadecanoyl-CoA = 1,2-dihexadecanoyl-sn-glycero-3-phospho-(1D-myo-inositol) + CoA. It carries out the reaction 1-hexadecanoyl-sn-glycero-3-phospho-(1D-myo-inositol) + octadecanoyl-CoA = 1-hexadecanoyl-2-octadecanoyl-sn-glycero-3-phospho-(1D-myo-inositol) + CoA. The enzyme catalyses 1-hexadecanoyl-sn-glycero-3-phospho-(1D-myo-inositol) + (9Z)-octadecenoyl-CoA = 1-hexadecanoyl-2-(9Z-octadecenoyl)-sn-glycero-3-phospho-(1D-myo-inositol) + CoA. The catalysed reaction is 1-hexadecanoyl-sn-glycero-3-phospho-(1D-myo-inositol) + (9Z,12Z)-octadecadienoyl-CoA = 1-hexadecanoyl-2-(9Z,12Z-octadecadienoyl)-sn-glycero-3-phospho-(1D-myo-inositol) + CoA. It catalyses the reaction 1-hexadecanoyl-sn-glycero-3-phospho-(1D-myo-inositol) + (5Z,8Z,11Z,14Z)-eicosatetraenoyl-CoA = 1-hexadecanoyl-2-(5Z,8Z,11Z,14Z-eicosatetraenoyl)-sn-glycero-3-phospho-D-myo-inositol + CoA. It carries out the reaction 1-hexadecanoyl-sn-glycero-3-phospho-(1'-sn-glycerol) + hexadecanoyl-CoA = 1,2-dihexadecanoyl-sn-glycero-3-phospho-(1'-sn-glycerol) + CoA. The enzyme catalyses 1-hexadecanoyl-sn-glycero-3-phospho-(1'-sn-glycerol) + octadecanoyl-CoA = 1-hexadecanoyl-2-octadecanoyl-sn-glycero-3-phospho-(1'-sn-glycerol) + CoA. The catalysed reaction is 1-hexadecanoyl-sn-glycero-3-phospho-(1'-sn-glycerol) + (9Z)-octadecenoyl-CoA = 1-hexadecanoyl-2-(9Z-octadecenoyl)-sn-glycero-3-phospho-(1'-sn-glycerol) + CoA. It catalyses the reaction 1-hexadecanoyl-sn-glycero-3-phospho-(1'-sn-glycerol) + (9Z,12Z)-octadecadienoyl-CoA = 1-hexadecanoyl-2-(9Z,12Z-octadecadienoyl)-sn-glycero-3-phospho-(1'-sn-glycerol) + CoA. It carries out the reaction 1-tetradecanoyl-sn-glycero-3-phospho-(1'-sn-glycerol) + (9Z)-octadecenoyl-CoA = 1-tetradecanoyl-2-(9Z-octadecenoyl)-sn-glycero-3-phospho-(1'-sn-glycerol) + CoA. The enzyme catalyses 1-octadecanoyl-sn-glycero-3-phospho-(1'-sn-glycerol) + (9Z)-octadecenoyl-CoA = 1-octadecanoyl-2-(9Z-octadecenoyl)-sn-glycero-3-phospho-(1'-sn-glycerol) + CoA. The catalysed reaction is 1-(9Z-octadecenoyl)-sn-glycero-3-phospho-(1'-sn-glycerol) + (9Z)-octadecenoyl-CoA = 1,2-di-(9Z-octadecenoyl)-sn-glycero-3-phospho-(1'-sn-glycerol) + CoA. It catalyses the reaction 1-hexadecanoyl-sn-glycero-3-phospho-(1D-myo-inositol) + dodecanoyl-CoA = 1-hexadecanoyl-2-dodecanoyl-sn-glycero-3-phospho-(1D-myo-inositol) + CoA. It carries out the reaction 1',3'-bis-[1-acyl-sn-glycero-3-phospho]-glycerol + (9Z)-octadecenoyl-CoA = 1'-[1-acyl-2-(9Z)-octadecenoyl-sn-glycero-3-phospho],3'-[1-acyl,2-hydroxy-sn-glycero-3-phospho]-glycerol + CoA. The enzyme catalyses 1'-[1,2-diacyl-sn-glycero-3-phospho],3'-[1-acyl-sn-glycero-3-phospho]-glycerol + (9Z)-octadecenoyl-CoA = 1'-[1,2-diacyl-sn-glycero-3-phospho],3'-[1-acyl,2-(9Z)-octadecenoyl-sn-glycero-3-phospho]-glycerol + CoA. The catalysed reaction is 1'-[1,2-diacyl-sn-glycero-3-phospho],3'-[1-acyl-sn-glycero-3-phospho]-glycerol + (9Z,12Z)-octadecadienoyl-CoA = 1'-[1,2-diacyl-sn-glycero-3-phospho],3'-[1-acyl,2-(9Z,12Z)-octadecadienoyl-sn-glycero-3-phospho]-glycerol + CoA. It catalyses the reaction 1'-[1,2-diacyl-sn-glycero-3-phospho],3'-[1-acyl-sn-glycero-3-phospho]-glycerol + dodecanoyl-CoA = 1'-[1,2-diacyl-sn-glycero-3-phospho],3'-[1-acyl,2-dodecanoyl-sn-glycero-3-phospho]-glycerol + CoA. It carries out the reaction 1',3'-bis-[1-acyl-sn-glycero-3-phospho]-glycerol + dodecanoyl-CoA = 1'-[1-acyl-2-dodecanoyl-sn-glycero-3-phospho],3'-[1-acyl,2-hydroxy-sn-glycero-3-phospho]-glycerol + CoA. The enzyme catalyses a 1-acyl-sn-glycero-3-phosphate + (9Z)-octadecenoyl-CoA = a 1-acyl-2-(9Z-octadecenoyl)-sn-glycero-3-phosphate + CoA. The catalysed reaction is 1',3'-bis-[1-acyl-sn-glycero-3-phospho]-glycerol + (9Z,12Z)-octadecadienoyl-CoA = 1'-[1-acyl-2-(9Z,12Z)-octadecadienoyl-sn-glycero-3-phospho],3'-[1-acyl,2-hydroxy-sn-glycero-3-phospho]-glycerol + CoA. It catalyses the reaction 1',3'-bis-[1-acyl-sn-glycero-3-phospho]-glycerol + hexadecanoyl-CoA = 1'-[1-acyl-2-hexadecanoyl-sn-glycero-3-phospho],3'-[1-acyl,2-hydroxy-sn-glycero-3-phospho]-glycerol + CoA. It carries out the reaction 1',3'-bis-[1-acyl-sn-glycero-3-phospho]-glycerol + octadecanoyl-CoA = 1'-[1-acyl-2-octadecanoyl-sn-glycero-3-phospho],3'-[1-acyl,2-hydroxy-sn-glycero-3-phospho]-glycerol + CoA. The enzyme catalyses 1'-[1,2-diacyl-sn-glycero-3-phospho],3'-[1-acyl-sn-glycero-3-phospho]-glycerol + octanoyl-CoA = 1'-[1,2-diacyl-sn-glycero-3-phospho],3'-[1-acyl,2-octanoyl-sn-glycero-3-phospho]-glycerol + CoA. The catalysed reaction is 1',3'-bis-[1-acyl-sn-glycero-3-phospho]-glycerol + octanoyl-CoA = 1'-[1-acyl-2-octanoyl-sn-glycero-3-phospho],3'-[1-acyl,2-hydroxy-sn-glycero-3-phospho]-glycerol + CoA. It catalyses the reaction 1'-[1,2-diacyl-sn-glycero-3-phospho],3'-[1-acyl-sn-glycero-3-phospho]-glycerol + hexadecanoyl-CoA = 1'-[1,2-diacyl-sn-glycero-3-phospho],3'-[1-acyl,2-hexadecanoyl-sn-glycero-3-phospho]-glycerol + CoA. It carries out the reaction 1'-[1,2-diacyl-sn-glycero-3-phospho],3'-[1-acyl-sn-glycero-3-phospho]-glycerol + (5Z,8Z,11Z,14Z)-eicosatetraenoyl-CoA = 1'-[1,2-diacyl-sn-glycero-3-phospho],3'-[1-acyl,2-(5Z,8Z,11Z,14Z)-eicosatetraenoyl-sn-glycero-3-phospho]-glycerol + CoA. The enzyme catalyses 1',3'-bis-[1-acyl-sn-glycero-3-phospho]-glycerol + (5Z,8Z,11Z,14Z)-eicosatetraenoyl-CoA = 1'-[1-acyl-2-(5Z,8Z,11Z,14Z)-eicosatetraenoyl-sn-glycero-3-phospho],3'-[1-acyl,2-hydroxy-sn-glycero-3-phospho]-glycerol + CoA. The catalysed reaction is a 1-acyl-sn-glycero-3-phospho-(1D-myo-inositol) + octadecanoyl-CoA = a 1-acyl-2-octadecanoyl-sn-glycero-3-phospho-(1D-myo-inositol) + CoA. It catalyses the reaction a 2-acyl-sn-glycero-3-phospho-D-myo-inositol + octadecanoyl-CoA = 1-octadecanoyl-2-acyl-sn-glycero-3-phospho-1D-myo-inositol + CoA. The protein operates within phospholipid metabolism; CDP-diacylglycerol biosynthesis; CDP-diacylglycerol from sn-glycerol 3-phosphate: step 2/3. Functionally, exhibits acyl-CoA:lysocardiolipin acyltransferase (ALCAT) activity; catalyzes the reacylation of lyso-cardiolipin to cardiolipin (CL), a key step in CL remodeling. Recognizes both monolysocardiolipin and dilysocardiolipin as substrates with a preference for linoleoyl-CoA and oleoyl-CoA as acyl donors. Also exhibits 1-acyl-sn-glycerol-3-phosphate acyltransferase activity (AGPAT) activity; converts 1-acyl-sn-glycerol-3- phosphate (lysophosphatidic acid or LPA) into 1,2-diacyl-sn-glycerol-3- phosphate (phosphatidic acid or PA) by incorporating an acyl moiety at the sn-2 position of the glycerol backbone. Possesses both lysophosphatidylinositol acyltransferase (LPIAT) and lysophosphatidylglycerol acyltransferase (LPGAT) activities. Required for establishment of the hematopoietic and endothelial lineages. This chain is Lysocardiolipin acyltransferase 1 (LCLAT1), found in Gallus gallus (Chicken).